We begin with the raw amino-acid sequence, 369 residues long: Ribonuclease 3 (369 aa).

An RNase III domain is found at 6 to 142; the sequence is IGFVQSSINY…IIGAVAADCD (137 aa). Residue glutamate 46 participates in Mg(2+) binding. Residue aspartate 50 is part of the active site. Aspartate 128 and glutamate 131 together coordinate Mg(2+). The active site involves glutamate 131. The DRBM domain occupies 272-341; it reads NPASTLHELF…SLKLLKFIAK (70 aa).

It belongs to the ribonuclease III family. As to quaternary structure, homodimer. The cofactor is Mg(2+).

The protein localises to the cytoplasm. The catalysed reaction is Endonucleolytic cleavage to 5'-phosphomonoester.. Digests double-stranded RNA. Involved in the processing of primary rRNA transcript to yield the immediate precursors to the large and small rRNAs (23S and 16S). Processes some mRNAs, and tRNAs when they are encoded in the rRNA operon. Processes pre-crRNA and tracrRNA of type II CRISPR loci if present in the organism. This Treponema succinifaciens (strain ATCC 33096 / DSM 2489 / 6091) protein is Ribonuclease 3 (rnc).